The primary structure comprises 255 residues: 1-(5-phosphoribosyl)-5-[(5-phosphoribosylamino)methylideneamino] imidazole-4-carboxamide isomerase (255 aa).

The active-site Proton acceptor is the Asp8. The Proton donor role is filled by Asp129.

It belongs to the HisA/HisF family.

It localises to the cytoplasm. It carries out the reaction 1-(5-phospho-beta-D-ribosyl)-5-[(5-phospho-beta-D-ribosylamino)methylideneamino]imidazole-4-carboxamide = 5-[(5-phospho-1-deoxy-D-ribulos-1-ylimino)methylamino]-1-(5-phospho-beta-D-ribosyl)imidazole-4-carboxamide. It functions in the pathway amino-acid biosynthesis; L-histidine biosynthesis; L-histidine from 5-phospho-alpha-D-ribose 1-diphosphate: step 4/9. This chain is 1-(5-phosphoribosyl)-5-[(5-phosphoribosylamino)methylideneamino] imidazole-4-carboxamide isomerase, found in Prochlorococcus marinus (strain MIT 9312).